A 476-amino-acid chain; its full sequence is Bifunctional protein HldE (476 aa).

Positions 1-318 (MKPILPDYNS…AEAVHGSQDT (318 aa)) are ribokinase. Position 195 to 198 (195 to 198 (NMKE)) interacts with ATP. Asp264 is a catalytic residue. The segment at 344 to 476 (MTNGCFDILH…IINAIKGGKG (133 aa)) is cytidylyltransferase.

This sequence in the N-terminal section; belongs to the carbohydrate kinase PfkB family. The protein in the C-terminal section; belongs to the cytidylyltransferase family. In terms of assembly, homodimer.

It carries out the reaction D-glycero-beta-D-manno-heptose 7-phosphate + ATP = D-glycero-beta-D-manno-heptose 1,7-bisphosphate + ADP + H(+). It catalyses the reaction D-glycero-beta-D-manno-heptose 1-phosphate + ATP + H(+) = ADP-D-glycero-beta-D-manno-heptose + diphosphate. It participates in nucleotide-sugar biosynthesis; ADP-L-glycero-beta-D-manno-heptose biosynthesis; ADP-L-glycero-beta-D-manno-heptose from D-glycero-beta-D-manno-heptose 7-phosphate: step 1/4. The protein operates within nucleotide-sugar biosynthesis; ADP-L-glycero-beta-D-manno-heptose biosynthesis; ADP-L-glycero-beta-D-manno-heptose from D-glycero-beta-D-manno-heptose 7-phosphate: step 3/4. It functions in the pathway bacterial outer membrane biogenesis; LPS core biosynthesis. Catalyzes the phosphorylation of D-glycero-D-manno-heptose 7-phosphate at the C-1 position to selectively form D-glycero-beta-D-manno-heptose-1,7-bisphosphate. Functionally, catalyzes the ADP transfer from ATP to D-glycero-beta-D-manno-heptose 1-phosphate, yielding ADP-D-glycero-beta-D-manno-heptose. This chain is Bifunctional protein HldE, found in Vibrio parahaemolyticus serotype O3:K6 (strain RIMD 2210633).